A 1436-amino-acid polypeptide reads, in one-letter code: Gag-Pol polyprotein (1436 aa).

G2 is lipidated: N-myristoyl glycine; by host. Residues 7–31 are interaction with Gp41; the sequence is VLSGGKLDAWEKIRLRPGGKKKYRL. Residues 8-43 are interaction with host CALM1; it reads LSGGKLDAWEKIRLRPGGKKKYRLKHLVWASRELER. The interaction with host AP3D1 stretch occupies residues 12–19; it reads KLDAWEKI. Residues 14 to 33 are interaction with membrane phosphatidylinositol 4,5-bisphosphate and RNA; that stretch reads DAWEKIRLRPGGKKKYRLKH. Positions 16–22 match the Nuclear export signal motif; sequence WEKIRLR. The short motif at 26-32 is the Nuclear localization signal element; sequence KKKYRLK. The interval 73–77 is interaction with membrane phosphatidylinositol 4,5-bisphosphate; that stretch reads EELRS. The interval 102–129 is disordered; it reads EKMEEEQNKSKNKKAQQAAADAGNNSQV. Positions 116–128 are enriched in low complexity; the sequence is AQQAAADAGNNSQ. At Y133 the chain carries Phosphotyrosine; by host. Residues 190–228 form an interaction with human PPIA/CYPA and NUP153 region; sequence NTVGGHQAAMQMLKETINEEAAEWDRLHPVHAGPIAPGQ. The dimerization/Multimerization of capsid protein p24 stretch occupies residues 278–364; that stretch reads YSPVSILDIR…GGPSHKARVL (87 aa). 2 CCHC-type zinc fingers span residues 392-409 and 413-430; these read IKCF…NCRA and KGCW…DCTE. A dimerization of protease region spans residues 490 to 494; sequence PQITL. The Peptidase A2 domain occupies 509 to 578; it reads KEALLDTGAD…TPVNIIGRNL (70 aa). D514 serves as the catalytic For protease activity; shared with dimeric partner. Dimerization of protease regions lie at residues 538-544 and 577-589; these read GIGGFIK and NLLT…LNFP. The Reverse transcriptase domain maps to 632–822; that stretch reads EGKISRVGPE…PPFLWMGYEL (191 aa). Mg(2+) contacts are provided by D698, D773, and D774. An RT 'primer grip' region spans residues 815 to 823; sequence FLWMGYELH. A Tryptophan repeat motif motif is present at residues 986–1002; sequence WETWWVEYWQATWIPEW. Positions 1022–1145 constitute an RNase H type-1 domain; sequence IIGAETFYVD…VDKLVSQGIR (124 aa). Residues D1031, E1066, D1086, and D1137 each contribute to the Mg(2+) site. An Integrase-type zinc finger spans residues 1151–1192; sequence DGIDKAQEEHEKYHNNWRAMASDFNLPPVVAKEIVASCDKCQ. The Zn(2+) site is built by H1160, H1164, C1188, and C1191. The Integrase catalytic domain maps to 1202–1352; sequence VDCSPGIWQL…SAGERIIDII (151 aa). Mg(2+) contacts are provided by D1212, D1264, and E1300. Positions 1371-1418 form a DNA-binding region, integrase-type; the sequence is FRVYYRDSRDPIWKGPAKLLWKGEGAVVIQDNSDIKVVPRRKVKIIRD.

In terms of assembly, homotrimer; further assembles as hexamers of trimers. Interacts with gp41 (via C-terminus). Interacts with host CALM1; this interaction induces a conformational change in the Matrix protein, triggering exposure of the myristate group. Interacts with host AP3D1; this interaction allows the polyprotein trafficking to multivesicular bodies during virus assembly. Part of the pre-integration complex (PIC) which is composed of viral genome, matrix protein, Vpr and integrase. Homodimer; the homodimer further multimerizes as homohexamers or homopentamers. Interacts with human PPIA/CYPA; This interaction stabilizes the capsid. Interacts with human NUP153. Interacts with host PDZD8; this interaction stabilizes the capsid. Interacts with monkey TRIM5; this interaction destabilizes the capsid. As to quaternary structure, homodimer, whose active site consists of two apposed aspartic acid residues. In terms of assembly, heterodimer of p66 RT and p51 RT (RT p66/p51). Heterodimerization of RT is essential for DNA polymerase activity. The overall folding of the subdomains is similar in p66 RT and p51 RT but the spatial arrangements of the subdomains are dramatically different. Homotetramer; may further associate as a homohexadecamer. Part of the pre-integration complex (PIC) which is composed of viral genome, matrix protein, Vpr and integrase. Interacts with human SMARCB1/INI1 and human PSIP1/LEDGF isoform 1. Interacts with human KPNA3; this interaction might play a role in nuclear import of the pre-integration complex. Interacts with human NUP153; this interaction might play a role in nuclear import of the pre-integration complex. The cofactor is Mg(2+). Post-translationally, specific enzymatic cleavages by the viral protease yield mature proteins. The protease is released by autocatalytic cleavage. The polyprotein is cleaved during and after budding, this process is termed maturation. Proteolytic cleavage of p66 RT removes the RNase H domain to yield the p51 RT subunit. Nucleocapsid protein p7 might be further cleaved after virus entry. Tyrosine phosphorylated presumably in the virion by a host kinase. Phosphorylation is apparently not a major regulator of membrane association. In terms of processing, phosphorylated possibly by host MAPK1; this phosphorylation is necessary for Pin1-mediated virion uncoating. Post-translationally, methylated by host PRMT6, impairing its function by reducing RNA annealing and the initiation of reverse transcription.

It is found in the host cell membrane. The protein localises to the host endosome. The protein resides in the host multivesicular body. It localises to the virion membrane. Its subcellular location is the host nucleus. It is found in the host cytoplasm. The protein localises to the virion. The enzyme catalyses Specific for a P1 residue that is hydrophobic, and P1' variable, but often Pro.. It catalyses the reaction Endohydrolysis of RNA in RNA/DNA hybrids. Three different cleavage modes: 1. sequence-specific internal cleavage of RNA. Human immunodeficiency virus type 1 and Moloney murine leukemia virus enzymes prefer to cleave the RNA strand one nucleotide away from the RNA-DNA junction. 2. RNA 5'-end directed cleavage 13-19 nucleotides from the RNA end. 3. DNA 3'-end directed cleavage 15-20 nucleotides away from the primer terminus.. It carries out the reaction 3'-end directed exonucleolytic cleavage of viral RNA-DNA hybrid.. The catalysed reaction is DNA(n) + a 2'-deoxyribonucleoside 5'-triphosphate = DNA(n+1) + diphosphate. Its activity is regulated as follows. Protease: The viral protease is inhibited by many synthetic protease inhibitors (PIs), such as amprenavir, atazanavir, indinavir, loprinavir, nelfinavir, ritonavir and saquinavir. Use of protease inhibitors in tritherapy regimens permit more ambitious therapeutic strategies. Reverse transcriptase/ribonuclease H: RT can be inhibited either by nucleoside RT inhibitors (NRTIs) or by non nucleoside RT inhibitors (NNRTIs). NRTIs act as chain terminators, whereas NNRTIs inhibit DNA polymerization by binding a small hydrophobic pocket near the RT active site and inducing an allosteric change in this region. Classical NRTIs are abacavir, adefovir (PMEA), didanosine (ddI), lamivudine (3TC), stavudine (d4T), tenofovir (PMPA), zalcitabine (ddC), and zidovudine (AZT). Classical NNRTIs are atevirdine (BHAP U-87201E), delavirdine, efavirenz (DMP-266), emivirine (I-EBU), and nevirapine (BI-RG-587). The tritherapies used as a basic effective treatment of AIDS associate two NRTIs and one NNRTI. Its function is as follows. Mediates, with Gag polyprotein, the essential events in virion assembly, including binding the plasma membrane, making the protein-protein interactions necessary to create spherical particles, recruiting the viral Env proteins, and packaging the genomic RNA via direct interactions with the RNA packaging sequence (Psi). Gag-Pol polyprotein may regulate its own translation, by the binding genomic RNA in the 5'-UTR. At low concentration, the polyprotein would promote translation, whereas at high concentration, the polyprotein would encapsidate genomic RNA and then shut off translation. Functionally, targets the polyprotein to the plasma membrane via a multipartite membrane-binding signal, that includes its myristoylated N-terminus. Matrix protein is part of the pre-integration complex. Implicated in the release from host cell mediated by Vpu. Binds to RNA. In terms of biological role, forms the conical core that encapsulates the genomic RNA-nucleocapsid complex in the virion. Most core are conical, with only 7% tubular. The core is constituted by capsid protein hexamer subunits. The core is disassembled soon after virion entry. Host restriction factors such as TRIM5-alpha or TRIMCyp bind retroviral capsids and cause premature capsid disassembly, leading to blocks in reverse transcription. Capsid restriction by TRIM5 is one of the factors which restricts HIV-1 to the human species. Host PIN1 apparently facilitates the virion uncoating. On the other hand, interactions with PDZD8 or CYPA stabilize the capsid. Encapsulates and protects viral dimeric unspliced genomic RNA (gRNA). Binds these RNAs through its zinc fingers. Acts as a nucleic acid chaperone which is involved in rearangement of nucleic acid secondary structure during gRNA retrotranscription. Also facilitates template switch leading to recombination. As part of the polyprotein, participates in gRNA dimerization, packaging, tRNA incorporation and virion assembly. Its function is as follows. Aspartyl protease that mediates proteolytic cleavages of Gag and Gag-Pol polyproteins during or shortly after the release of the virion from the plasma membrane. Cleavages take place as an ordered, step-wise cascade to yield mature proteins. This process is called maturation. Displays maximal activity during the budding process just prior to particle release from the cell. Also cleaves Nef and Vif, probably concomitantly with viral structural proteins on maturation of virus particles. Hydrolyzes host EIF4GI and PABP1 in order to shut off the capped cellular mRNA translation. The resulting inhibition of cellular protein synthesis serves to ensure maximal viral gene expression and to evade host immune response. Also mediates cleavage of host YTHDF3. Mediates cleavage of host CARD8, thereby activating the CARD8 inflammasome, leading to the clearance of latent HIV-1 in patient CD4(+) T-cells after viral reactivation; in contrast, HIV-1 can evade CARD8-sensing when its protease remains inactive in infected cells prior to viral budding. Functionally, multifunctional enzyme that converts the viral RNA genome into dsDNA in the cytoplasm, shortly after virus entry into the cell. This enzyme displays a DNA polymerase activity that can copy either DNA or RNA templates, and a ribonuclease H (RNase H) activity that cleaves the RNA strand of RNA-DNA heteroduplexes in a partially processive 3' to 5' endonucleasic mode. Conversion of viral genomic RNA into dsDNA requires many steps. A tRNA(3)-Lys binds to the primer-binding site (PBS) situated at the 5'-end of the viral RNA. RT uses the 3' end of the tRNA primer to perform a short round of RNA-dependent minus-strand DNA synthesis. The reading proceeds through the U5 region and ends after the repeated (R) region which is present at both ends of viral RNA. The portion of the RNA-DNA heteroduplex is digested by the RNase H, resulting in a ssDNA product attached to the tRNA primer. This ssDNA/tRNA hybridizes with the identical R region situated at the 3' end of viral RNA. This template exchange, known as minus-strand DNA strong stop transfer, can be either intra- or intermolecular. RT uses the 3' end of this newly synthesized short ssDNA to perform the RNA-dependent minus-strand DNA synthesis of the whole template. RNase H digests the RNA template except for two polypurine tracts (PPTs) situated at the 5'-end and near the center of the genome. It is not clear if both polymerase and RNase H activities are simultaneous. RNase H probably can proceed both in a polymerase-dependent (RNA cut into small fragments by the same RT performing DNA synthesis) and a polymerase-independent mode (cleavage of remaining RNA fragments by free RTs). Secondly, RT performs DNA-directed plus-strand DNA synthesis using the PPTs that have not been removed by RNase H as primers. PPTs and tRNA primers are then removed by RNase H. The 3' and 5' ssDNA PBS regions hybridize to form a circular dsDNA intermediate. Strand displacement synthesis by RT to the PBS and PPT ends produces a blunt ended, linear dsDNA copy of the viral genome that includes long terminal repeats (LTRs) at both ends. In terms of biological role, catalyzes viral DNA integration into the host chromosome, by performing a series of DNA cutting and joining reactions. This enzyme activity takes place after virion entry into a cell and reverse transcription of the RNA genome in dsDNA. The first step in the integration process is 3' processing. This step requires a complex comprising the viral genome, matrix protein, Vpr and integrase. This complex is called the pre-integration complex (PIC). The integrase protein removes 2 nucleotides from each 3' end of the viral DNA, leaving recessed CA OH's at the 3' ends. In the second step, the PIC enters cell nucleus. This process is mediated through integrase and Vpr proteins, and allows the virus to infect a non dividing cell. This ability to enter the nucleus is specific of lentiviruses, other retroviruses cannot and rely on cell division to access cell chromosomes. In the third step, termed strand transfer, the integrase protein joins the previously processed 3' ends to the 5' ends of strands of target cellular DNA at the site of integration. The 5'-ends are produced by integrase-catalyzed staggered cuts, 5 bp apart. A Y-shaped, gapped, recombination intermediate results, with the 5'-ends of the viral DNA strands and the 3' ends of target DNA strands remaining unjoined, flanking a gap of 5 bp. The last step is viral DNA integration into host chromosome. This involves host DNA repair synthesis in which the 5 bp gaps between the unjoined strands are filled in and then ligated. Since this process occurs at both cuts flanking the HIV genome, a 5 bp duplication of host DNA is produced at the ends of HIV-1 integration. Alternatively, Integrase may catalyze the excision of viral DNA just after strand transfer, this is termed disintegration. This chain is Gag-Pol polyprotein (gag-pol), found in Homo sapiens (Human).